The following is a 200-amino-acid chain: Recombination protein RecR (200 aa).

Residues 58–73 (CQKCHNISDTTLCSIC) form a C4-type zinc finger. One can recognise a Toprim domain in the interval 81–176 (GLICVVENIQ…KLSNIARGVA (96 aa)).

It belongs to the RecR family.

In terms of biological role, may play a role in DNA repair. It seems to be involved in an RecBC-independent recombinational process of DNA repair. It may act with RecF and RecO. The chain is Recombination protein RecR from Amoebophilus asiaticus (strain 5a2).